A 223-amino-acid chain; its full sequence is Adenylate kinase 4, mitochondrial (223 aa).

15-20 contacts a ribonucleoside 5'-triphosphate; that stretch reads GSGKGT. The interval 35 to 64 is NMP; it reads SSGHFLRENIKANTEVGEMAKQYIEKSLLV. The AMP site is built by Ser-36 and Arg-41. Lys-60 is subject to N6-succinyllysine. AMP-binding positions include 62-64, 89-92, and Gln-96; these read LLV and GFPR. The LID stretch occupies residues 125–162; the sequence is RRWIHPPSGRVYNLDFNPPHVHGIDDVTGEPLVQQEDD. A ribonucleoside 5'-triphosphate-binding positions include Arg-126 and 135–136; that span reads VY. Residue Arg-170 coordinates AMP. At Lys-175 the chain carries N6-acetyllysine. N6-acetyllysine; alternate occurs at positions 179 and 186. 2 positions are modified to N6-succinyllysine; alternate: Lys-179 and Lys-186. A ribonucleoside 5'-triphosphate is bound at residue Thr-199.

This sequence belongs to the adenylate kinase family. AK3 subfamily. In terms of assembly, monomer. Interacts with SLC25A5/ANT2.

The protein resides in the mitochondrion matrix. It catalyses the reaction a ribonucleoside 5'-phosphate + ATP = a ribonucleoside 5'-diphosphate + ADP. The catalysed reaction is AMP + ATP = 2 ADP. The enzyme catalyses GTP + AMP = GDP + ADP. It carries out the reaction CMP + ATP = CDP + ADP. It catalyses the reaction GTP + CMP = CDP + GDP. The catalysed reaction is dAMP + ATP = dADP + ADP. The enzyme catalyses dCMP + ATP = dCDP + ADP. It carries out the reaction a 2'-deoxyribonucleoside 5'-diphosphate + ATP = a 2'-deoxyribonucleoside 5'-triphosphate + ADP. It catalyses the reaction a ribonucleoside 5'-diphosphate + ATP = a ribonucleoside 5'-triphosphate + ADP. The catalysed reaction is GDP + ATP = GTP + ADP. The enzyme catalyses CDP + GTP = CTP + GDP. It carries out the reaction CDP + ATP = CTP + ADP. It catalyses the reaction UDP + ATP = UTP + ADP. The catalysed reaction is GTP + UDP = UTP + GDP. The enzyme catalyses dADP + GTP = dATP + GDP. It carries out the reaction dCDP + GTP = dCTP + GDP. It catalyses the reaction dCDP + ATP = dCTP + ADP. The catalysed reaction is dGDP + ATP = dGTP + ADP. The enzyme catalyses dTDP + GTP = dTTP + GDP. It carries out the reaction dTDP + ATP = dTTP + ADP. Broad-specificity mitochondrial nucleoside phosphate kinase involved in cellular nucleotide homeostasis by catalyzing nucleoside-phosphate interconversions. Similar to other adenylate kinases, preferentially catalyzes the phosphorylation of the nucleoside monophosphate AMP with ATP as phosphate donor to produce ADP. Phosphorylates only AMP when using GTP as phosphate donor. In vitro, can also catalyze the phosphorylation of CMP, dAMP and dCMP and use GTP as an alternate phosphate donor. Moreover, exhibits a diphosphate kinase activity, producing ATP, CTP, GTP, UTP, TTP, dATP, dCTP and dGTP from the corresponding diphosphate substrates with either ATP or GTP as phosphate donors. Plays a role in controlling cellular ATP levels by regulating phosphorylation and activation of the energy sensor protein kinase AMPK. Plays a protective role in the cellular response to oxidative stress. This Pongo abelii (Sumatran orangutan) protein is Adenylate kinase 4, mitochondrial.